The following is a 249-amino-acid chain: Triosephosphate isomerase (249 aa).

Substrate-binding residues include asparagine 12 and lysine 14. Lysine 14 bears the N6-acetyllysine mark. 3'-nitrotyrosine is present on tyrosine 68. Serine 80 is modified (phosphoserine). Catalysis depends on histidine 96, which acts as the Electrophile. The residue at position 106 (serine 106) is a Phosphoserine. Lysine 142 is covalently cross-linked (Glycyl lysine isopeptide (Lys-Gly) (interchain with G-Cter in SUMO1)). An N6-succinyllysine modification is found at lysine 149. Residue lysine 156 is modified to N6-acetyllysine; alternate. Lysine 156 is subject to N6-succinyllysine; alternate. Phosphoserine is present on serine 159. The Proton acceptor role is filled by glutamate 166. A Phosphothreonine modification is found at threonine 173. Lysine 194 is modified (N6-acetyllysine; alternate). Residue lysine 194 is modified to N6-succinyllysine; alternate. N6-methyllysine; alternate is present on lysine 194. Serine 198 is subject to Phosphoserine. At tyrosine 209 the chain carries 3'-nitrotyrosine. Residue serine 212 is modified to Phosphoserine. Phosphothreonine is present on threonine 214. Serine 223 is modified (phosphoserine). N6-acetyllysine is present on lysine 238.

Belongs to the triosephosphate isomerase family. As to quaternary structure, homodimer.

It is found in the cytoplasm. The catalysed reaction is dihydroxyacetone phosphate = methylglyoxal + phosphate. It catalyses the reaction D-glyceraldehyde 3-phosphate = dihydroxyacetone phosphate. It functions in the pathway carbohydrate degradation; glycolysis; D-glyceraldehyde 3-phosphate from glycerone phosphate: step 1/1. It participates in carbohydrate biosynthesis; gluconeogenesis. Its function is as follows. Triosephosphate isomerase is an extremely efficient metabolic enzyme that catalyzes the interconversion between dihydroxyacetone phosphate (DHAP) and D-glyceraldehyde-3-phosphate (G3P) in glycolysis and gluconeogenesis. It is also responsible for the non-negligible production of methylglyoxal a reactive cytotoxic side-product that modifies and can alter proteins, DNA and lipids. This Gorilla gorilla gorilla (Western lowland gorilla) protein is Triosephosphate isomerase (TPI1).